We begin with the raw amino-acid sequence, 576 residues long: Formate--tetrahydrofolate ligase (576 aa).

64 to 71 provides a ligand contact to ATP; sequence TPLGEGKT.

The protein belongs to the formate--tetrahydrofolate ligase family.

The enzyme catalyses (6S)-5,6,7,8-tetrahydrofolate + formate + ATP = (6R)-10-formyltetrahydrofolate + ADP + phosphate. It functions in the pathway one-carbon metabolism; tetrahydrofolate interconversion. The polypeptide is Formate--tetrahydrofolate ligase (Aeromonas hydrophila subsp. hydrophila (strain ATCC 7966 / DSM 30187 / BCRC 13018 / CCUG 14551 / JCM 1027 / KCTC 2358 / NCIMB 9240 / NCTC 8049)).